A 303-amino-acid chain; its full sequence is UDP-N-acetylenolpyruvoylglucosamine reductase (303 aa).

In terms of domain architecture, FAD-binding PCMH-type spans 30-195 (KTGGPADLLA…LSARFEMAKG (166 aa)). The active site involves Arg174. Residue Ser224 is the Proton donor of the active site. Glu294 is an active-site residue.

This sequence belongs to the MurB family. It depends on FAD as a cofactor.

It localises to the cytoplasm. The enzyme catalyses UDP-N-acetyl-alpha-D-muramate + NADP(+) = UDP-N-acetyl-3-O-(1-carboxyvinyl)-alpha-D-glucosamine + NADPH + H(+). It participates in cell wall biogenesis; peptidoglycan biosynthesis. Cell wall formation. The polypeptide is UDP-N-acetylenolpyruvoylglucosamine reductase (Latilactobacillus sakei subsp. sakei (strain 23K) (Lactobacillus sakei subsp. sakei)).